The primary structure comprises 413 residues: Putative tRNA pseudouridine synthase C16C4.06c (413 aa).

The active-site Nucleophile is the D96. Y154 provides a ligand contact to substrate.

It belongs to the tRNA pseudouridine synthase TruA family.

Its subcellular location is the cytoplasm. It is found in the nucleus. The enzyme catalyses a uridine in tRNA = a pseudouridine in tRNA. The sequence is that of Putative tRNA pseudouridine synthase C16C4.06c from Schizosaccharomyces pombe (strain 972 / ATCC 24843) (Fission yeast).